The following is a 624-amino-acid chain: Chaperone protein HtpG (624 aa).

An a; substrate-binding region spans residues 1 to 336; it reads MKGQETRGFQ…SNDLPLNVSR (336 aa). Positions 337-552 are b; it reads EILQDSTVTR…ADEMGTQMAK (216 aa). Residues 553–624 are c; it reads LFAAAGQAMP…IKRVNALLLG (72 aa).

Belongs to the heat shock protein 90 family. Homodimer.

It is found in the cytoplasm. Its function is as follows. Molecular chaperone. Has ATPase activity. The chain is Chaperone protein HtpG from Enterobacter sp. (strain 638).